The primary structure comprises 693 residues: Polyribonucleotide nucleotidyltransferase (693 aa).

Mg(2+) is bound by residues Asp487 and Asp493. Residues 554–613 enclose the KH domain; that stretch reads PRIYTIKINPEKIKDVIGKGGSIIRMLTEETGTVIEIKDDGIVKISAINGEKAKYAIKRI. One can recognise an S1 motif domain in the interval 623–691; sequence GKIYSGKVTR…RQGRIRLSMK (69 aa).

This sequence belongs to the polyribonucleotide nucleotidyltransferase family. In terms of assembly, component of the RNA degradosome, which is a multiprotein complex involved in RNA processing and mRNA degradation. Requires Mg(2+) as cofactor.

It is found in the cytoplasm. The enzyme catalyses RNA(n+1) + phosphate = RNA(n) + a ribonucleoside 5'-diphosphate. Its function is as follows. Involved in mRNA degradation. Catalyzes the phosphorolysis of single-stranded polyribonucleotides processively in the 3'- to 5'-direction. The sequence is that of Polyribonucleotide nucleotidyltransferase from Buchnera aphidicola subsp. Cinara cedri (strain Cc).